The primary structure comprises 489 residues: Glutamate--tRNA ligase (489 aa).

The short motif at 11–21 (PSPTGHLHIGG) is the 'HIGH' region element. C108, C110, C136, and H138 together coordinate Zn(2+). The 'KMSKS' region signature appears at 253 to 257 (KLSKR). An ATP-binding site is contributed by K256.

This sequence belongs to the class-I aminoacyl-tRNA synthetase family. Glutamate--tRNA ligase type 1 subfamily. In terms of assembly, monomer. Zn(2+) is required as a cofactor.

The protein resides in the cytoplasm. It carries out the reaction tRNA(Glu) + L-glutamate + ATP = L-glutamyl-tRNA(Glu) + AMP + diphosphate. Its function is as follows. Catalyzes the attachment of glutamate to tRNA(Glu) in a two-step reaction: glutamate is first activated by ATP to form Glu-AMP and then transferred to the acceptor end of tRNA(Glu). The protein is Glutamate--tRNA ligase of Geobacillus thermodenitrificans (strain NG80-2).